Reading from the N-terminus, the 411-residue chain is Glutamate dehydrogenase (411 aa).

Residue Lys-102 is part of the active site.

It belongs to the Glu/Leu/Phe/Val dehydrogenases family.

It catalyses the reaction L-glutamate + NAD(+) + H2O = 2-oxoglutarate + NH4(+) + NADH + H(+). The catalysed reaction is L-glutamate + NADP(+) + H2O = 2-oxoglutarate + NH4(+) + NADPH + H(+). This is Glutamate dehydrogenase (GDH1) from Zea mays (Maize).